The primary structure comprises 1173 residues: DNA-directed RNA polymerase subunit beta (1173 aa).

Positions 1–23 are disordered; sequence MEGSLLVASSTSNNETANTASTD. Residues 8–22 show a composition bias toward low complexity; it reads ASSTSNNETANTAST.

The protein belongs to the RNA polymerase beta chain family. The RNAP catalytic core consists of 2 alpha, 1 beta, 1 beta' and 1 omega subunit. When a sigma factor is associated with the core the holoenzyme is formed, which can initiate transcription.

The enzyme catalyses RNA(n) + a ribonucleoside 5'-triphosphate = RNA(n+1) + diphosphate. DNA-dependent RNA polymerase catalyzes the transcription of DNA into RNA using the four ribonucleoside triphosphates as substrates. This is DNA-directed RNA polymerase subunit beta from Paenarthrobacter aurescens (strain TC1).